A 375-amino-acid chain; its full sequence is Chaperone protein DnaJ 1 (375 aa).

Residues 4 to 68 (DYYAILGVER…EKRRIVDMGG (65 aa)) enclose the J domain. Residues 127-209 (GTKKPITIDT…CGGDGRVRTQ (83 aa)) form a CR-type zinc finger. Residues cysteine 140, cysteine 143, cysteine 157, cysteine 160, cysteine 183, cysteine 186, cysteine 197, and cysteine 200 each contribute to the Zn(2+) site. 4 CXXCXGXG motif repeats span residues 140–147 (CDRCEGTG), 157–164 (CSTCNGSG), 183–190 (CPTCRGTG), and 197–204 (CDKCGGDG).

This sequence belongs to the DnaJ family. In terms of assembly, homodimer. Requires Zn(2+) as cofactor.

The protein resides in the cytoplasm. Participates actively in the response to hyperosmotic and heat shock by preventing the aggregation of stress-denatured proteins and by disaggregating proteins, also in an autonomous, DnaK-independent fashion. Unfolded proteins bind initially to DnaJ; upon interaction with the DnaJ-bound protein, DnaK hydrolyzes its bound ATP, resulting in the formation of a stable complex. GrpE releases ADP from DnaK; ATP binding to DnaK triggers the release of the substrate protein, thus completing the reaction cycle. Several rounds of ATP-dependent interactions between DnaJ, DnaK and GrpE are required for fully efficient folding. Also involved, together with DnaK and GrpE, in the DNA replication of plasmids through activation of initiation proteins. This is Chaperone protein DnaJ 1 from Corynebacterium diphtheriae (strain ATCC 700971 / NCTC 13129 / Biotype gravis).